A 520-amino-acid polypeptide reads, in one-letter code: Leucine carboxyl methyltransferase 1 (520 aa).

2 disordered regions span residues methionine 1–valine 116 and threonine 142–arginine 174. The span at proline 79 to arginine 89 shows a compositional bias: low complexity. 2 stretches are compositionally biased toward polar residues: residues histidine 95–arginine 110 and threonine 142–serine 151. Residues arginine 185, glycine 210, aspartate 237, aspartate 305–valine 306, and glutamate 343 contribute to the S-adenosyl-L-methionine site.

Belongs to the methyltransferase superfamily. LCMT family.

The catalysed reaction is [phosphatase 2A protein]-C-terminal L-leucine + S-adenosyl-L-methionine = [phosphatase 2A protein]-C-terminal L-leucine methyl ester + S-adenosyl-L-homocysteine. Its function is as follows. Methylates the carboxyl group of the C-terminal leucine residue of protein phosphatase 2A catalytic subunits to form alpha-leucine ester residues. The protein is Leucine carboxyl methyltransferase 1 (PPM1) of Mycosarcoma maydis (Corn smut fungus).